We begin with the raw amino-acid sequence, 555 residues long: Cytochrome P450 78A11 (555 aa).

The helical transmembrane segment at valine 12–alanine 32 threads the bilayer. Position 495 (cysteine 495) interacts with heme.

It belongs to the cytochrome P450 family. Heme serves as cofactor. In terms of tissue distribution, expressed in seedlings, shoot apices and young panicles, but not in mature leaves, calli and roots.

The protein localises to the membrane. Involved in the regular timing (plastochron) of lateral organs formation. May regulate the rate of leaf initiation and the duration of vegetative phase. Seems to be redundant to the function of PLASTOCHRON2, but to act in an independent pathway. This is Cytochrome P450 78A11 (CYP78A11) from Oryza sativa subsp. japonica (Rice).